Here is a 95-residue protein sequence, read N- to C-terminus: uncharacterized protein (95 aa).

A run of 2 repeats spans residues glycine 67–cysteine 74 and cysteine 85–glycine 92. The interval glycine 67–glycine 92 is 2 X 8 AA approximate repeats.

This is an uncharacterized protein from Caenorhabditis elegans.